Here is a 747-residue protein sequence, read N- to C-terminus: Protein PHTF2 (747 aa).

A PHTF domain is found at 6–153; it reads TDAIVWYQKK…VHCQIVSTRT (148 aa). Helical transmembrane passes span 98 to 118 and 126 to 146; these read VIFS…VLFC and IPLT…TVHC. 2 disordered regions span residues 170-192 and 268-365; these read KAAH…TQEG and EDAA…SETE. A compositionally biased stretch (basic and acidic residues) spans 172–181; that stretch reads AHLEVHREGD. Residues 182-192 show a composition bias toward polar residues; that stretch reads GSSTTDNTQEG. N-linked (GlcNAc...) asparagine glycosylation is present at N291. Over residues 321–331 the composition is skewed to basic residues; the sequence is RNRKPHHYKKH. Residues 340–352 show a composition bias toward low complexity; that stretch reads SGTSCSSRCSSSR. Basic and acidic residues predominate over residues 353 to 362; it reads QDSESTRPES. Helical transmembrane passes span 459-479, 515-535, 596-616, and 630-650; these read IGYQ…PFVF, VLIS…LLCV, VIVS…CAQL, and WELV…VTLG. 2 N-linked (GlcNAc...) asparagine glycosylation sites follow: N659 and N718. A helical transmembrane segment spans residues 722 to 742; sequence VVILSAVSGVISDLLGFNLKL.

It is found in the membrane. This is Protein PHTF2 (Phtf2) from Mus musculus (Mouse).